Consider the following 386-residue polypeptide: Homoserine O-succinyltransferase (386 aa).

The AB hydrolase-1 domain occupies 49–358 (NAILICHALS…DAEQGHDSFL (310 aa)). Catalysis depends on S156, which acts as the Nucleophile. R226 contributes to the substrate binding site. Active-site residues include D321 and H354. D355 contributes to the substrate binding site.

This sequence belongs to the AB hydrolase superfamily. MetX family. In terms of assembly, homodimer.

The protein resides in the cytoplasm. The enzyme catalyses L-homoserine + succinyl-CoA = O-succinyl-L-homoserine + CoA. Its pathway is amino-acid biosynthesis; L-methionine biosynthesis via de novo pathway; O-succinyl-L-homoserine from L-homoserine: step 1/1. In terms of biological role, transfers a succinyl group from succinyl-CoA to L-homoserine, forming succinyl-L-homoserine. The polypeptide is Homoserine O-succinyltransferase (Acinetobacter baumannii (strain AB307-0294)).